Reading from the N-terminus, the 366-residue chain is MAPSGPGGVRRRCRRVLYWIPVVFISLLLGWSYYAYAIQLCIVSMENIGEQVVCLMAYHLLFAMFVWSYWKTIFTLPMNPSKEFHLSYAEKELLEREPRGEAHQEVLRRAAKDLPIYTRTMSGAIRYCDRCRLIKPDRCHHCSVCDKCILKMDHHCPWVNNCVGFSNYKFFLLFLAYSLLYCLFIAATDLQYFIRFWTNGLPDTQAKFHIMFLFFAAAMFSVSLSSLFGYHCWLVSKNKSTLEAFRNPVFRHGTDKNGFSLGFSKNMRQVFGDEKKYWLLPIFSSQGDGCSFPTCLVNQDPEQPSTPAGLNSTAKNPENHQFPAKPLRESQSHLLTDSQTWTENSSNSGRCKAGMSNPALTMENET.

The Cytoplasmic segment spans residues 1–15 (MAPSGPGGVRRRCRR). A helical membrane pass occupies residues 16-36 (VLYWIPVVFISLLLGWSYYAY). Over 37–47 (AIQLCIVSMEN) the chain is Lumenal. The chain crosses the membrane as a helical span at residues 48 to 68 (IGEQVVCLMAYHLLFAMFVWS). The Cytoplasmic portion of the chain corresponds to 69–169 (YWKTIFTLPM…NNCVGFSNYK (101 aa)). Residues 126–176 (RYCDRCRLIKPDRCHHCSVCDKCILKMDHHCPWVNNCVGFSNYKFFLLFLA) enclose the DHHC domain. The active-site S-palmitoyl cysteine intermediate is cysteine 156. A helical transmembrane segment spans residues 170-190 (FFLLFLAYSLLYCLFIAATDL). Topologically, residues 191–207 (QYFIRFWTNGLPDTQAK) are lumenal. The helical transmembrane segment at 208–228 (FHIMFLFFAAAMFSVSLSSLF) threads the bilayer. Over 229–366 (GYHCWLVSKN…NPALTMENET (138 aa)) the chain is Cytoplasmic. 2 stretches are compositionally biased toward polar residues: residues 297–316 (VNQDPEQPSTPAGLNSTAKN) and 332–349 (SHLLTDSQTWTENSSNSG). The disordered stretch occupies residues 297–366 (VNQDPEQPST…NPALTMENET (70 aa)). Positions 298–366 (NQDPEQPSTP…NPALTMENET (69 aa)) are mediates localization to plasma membrane and recycling endosomes. The Non-canonical dileucine endocytic signal motif lies at 334–335 (LL). Positions 357–360 (NPAL) match the NPxY-like endocytic signal motif.

The protein belongs to the DHHC palmitoyltransferase family. As to quaternary structure, monomer. Homodimer. The monomeric form has a higher catalytic activity. Autopalmitoylated.

The protein resides in the postsynaptic density. Its subcellular location is the postsynaptic recycling endosome membrane. It localises to the cell membrane. It is found in the endoplasmic reticulum membrane. The protein localises to the golgi apparatus membrane. The enzyme catalyses L-cysteinyl-[protein] + hexadecanoyl-CoA = S-hexadecanoyl-L-cysteinyl-[protein] + CoA. It catalyses the reaction L-cysteinyl-[protein] + tetradecanoyl-CoA = S-tetradecanoyl-L-cysteinyl-[protein] + CoA. The catalysed reaction is L-cysteinyl-[protein] + octadecanoyl-CoA = S-octadecanoyl-L-cysteinyl-[protein] + CoA. Functionally, palmitoyltransferase that catalyzes the addition of palmitate onto various protein substrates and is involved in a variety of cellular processes. Has no stringent fatty acid selectivity and in addition to palmitate can also transfer onto target proteins myristate from tetradecanoyl-CoA and stearate from octadecanoyl-CoA. In the nervous system, plays a role in long term synaptic potentiation by palmitoylating AKAP5 through which it regulates protein trafficking from the dendritic recycling endosomes to the plasma membrane and controls both structural and functional plasticity at excitatory synapses. In dendrites, mediates the palmitoylation of DLG4 when synaptic activity decreases and induces synaptic clustering of DLG4 and associated AMPA-type glutamate receptors. Also mediates the de novo and turnover palmitoylation of RGS7BP, a shuttle for Gi/o-specific GTPase-activating proteins/GAPs, promoting its localization to the plasma membrane in response to the activation of G protein-coupled receptors. Through the localization of these GTPase-activating proteins/GAPs, it also probably plays a role in G protein-coupled receptors signaling in neurons. Also probably plays a role in cell adhesion by palmitoylating CD9 and CD151 to regulate their expression and function. Palmitoylates the endoplasmic reticulum protein CKAP4 and regulates its localization to the plasma membrane. Could also palmitoylate LCK and regulate its localization to the plasma membrane. This chain is Palmitoyltransferase ZDHHC2, found in Rattus norvegicus (Rat).